A 427-amino-acid chain; its full sequence is Trigger factor (427 aa).

One can recognise a PPIase FKBP-type domain in the interval Gly-163–Pro-248.

Belongs to the FKBP-type PPIase family. Tig subfamily.

The protein localises to the cytoplasm. It catalyses the reaction [protein]-peptidylproline (omega=180) = [protein]-peptidylproline (omega=0). Involved in protein export. Acts as a chaperone by maintaining the newly synthesized protein in an open conformation. Functions as a peptidyl-prolyl cis-trans isomerase. The sequence is that of Trigger factor from Streptococcus sanguinis (strain SK36).